The sequence spans 272 residues: Putative protein-disulfide oxidoreductase RP025 (272 aa).

The signal sequence occupies residues 1–21; the sequence is MRNIFIVLIFLFLSNCSEVKA. The region spanning 74 to 263 is the Thioredoxin domain; it reads DSREQKKPEI…ISKAVDKALD (190 aa). Residues Cys116 and Cys119 are joined by a disulfide bond.

The protein belongs to the thioredoxin family. DsbA subfamily.

The protein localises to the periplasm. May be required for disulfide bond formation in some proteins. This chain is Putative protein-disulfide oxidoreductase RP025, found in Rickettsia prowazekii (strain Madrid E).